The following is a 284-amino-acid chain: Acetyl-coenzyme A carboxylase carboxyl transferase subunit beta (284 aa).

Residues 27-284 form the CoA carboxyltransferase N-terminal domain; it reads LMTKCPSCKY…ELHDGGVRHV (258 aa). Zn(2+) contacts are provided by cysteine 31, cysteine 34, cysteine 50, and cysteine 52. The segment at 31–52 adopts a C4-type zinc-finger fold; that stretch reads CPSCKYMHYTKQLNENHKVCDC.

Belongs to the AccD/PCCB family. As to quaternary structure, acetyl-CoA carboxylase is a heterohexamer composed of biotin carboxyl carrier protein (AccB), biotin carboxylase (AccC) and two subunits each of ACCase subunit alpha (AccA) and ACCase subunit beta (AccD). Zn(2+) serves as cofactor.

The protein localises to the cytoplasm. It carries out the reaction N(6)-carboxybiotinyl-L-lysyl-[protein] + acetyl-CoA = N(6)-biotinyl-L-lysyl-[protein] + malonyl-CoA. The protein operates within lipid metabolism; malonyl-CoA biosynthesis; malonyl-CoA from acetyl-CoA: step 1/1. In terms of biological role, component of the acetyl coenzyme A carboxylase (ACC) complex. Biotin carboxylase (BC) catalyzes the carboxylation of biotin on its carrier protein (BCCP) and then the CO(2) group is transferred by the transcarboxylase to acetyl-CoA to form malonyl-CoA. This chain is Acetyl-coenzyme A carboxylase carboxyl transferase subunit beta, found in Exiguobacterium sp. (strain ATCC BAA-1283 / AT1b).